Here is a 147-residue protein sequence, read N- to C-terminus: Large ribosomal subunit protein uL13 (147 aa).

Belongs to the universal ribosomal protein uL13 family. As to quaternary structure, part of the 50S ribosomal subunit.

In terms of biological role, this protein is one of the early assembly proteins of the 50S ribosomal subunit, although it is not seen to bind rRNA by itself. It is important during the early stages of 50S assembly. The polypeptide is Large ribosomal subunit protein uL13 (Corynebacterium diphtheriae (strain ATCC 700971 / NCTC 13129 / Biotype gravis)).